Reading from the N-terminus, the 219-residue chain is Thiamine-phosphate synthase (219 aa).

4-amino-2-methyl-5-(diphosphooxymethyl)pyrimidine contacts are provided by residues 48–52 (QFRQK) and Asn84. Residues Asp85 and Asp104 each coordinate Mg(2+). Position 123 (Ser123) interacts with 4-amino-2-methyl-5-(diphosphooxymethyl)pyrimidine. 150 to 152 (TPS) provides a ligand contact to 2-[(2R,5Z)-2-carboxy-4-methylthiazol-5(2H)-ylidene]ethyl phosphate. Position 153 (Lys153) interacts with 4-amino-2-methyl-5-(diphosphooxymethyl)pyrimidine. 2-[(2R,5Z)-2-carboxy-4-methylthiazol-5(2H)-ylidene]ethyl phosphate-binding positions include Gly181 and 199-200 (IS).

This sequence belongs to the thiamine-phosphate synthase family. The cofactor is Mg(2+).

The catalysed reaction is 2-[(2R,5Z)-2-carboxy-4-methylthiazol-5(2H)-ylidene]ethyl phosphate + 4-amino-2-methyl-5-(diphosphooxymethyl)pyrimidine + 2 H(+) = thiamine phosphate + CO2 + diphosphate. It catalyses the reaction 2-(2-carboxy-4-methylthiazol-5-yl)ethyl phosphate + 4-amino-2-methyl-5-(diphosphooxymethyl)pyrimidine + 2 H(+) = thiamine phosphate + CO2 + diphosphate. The enzyme catalyses 4-methyl-5-(2-phosphooxyethyl)-thiazole + 4-amino-2-methyl-5-(diphosphooxymethyl)pyrimidine + H(+) = thiamine phosphate + diphosphate. It participates in cofactor biosynthesis; thiamine diphosphate biosynthesis; thiamine phosphate from 4-amino-2-methyl-5-diphosphomethylpyrimidine and 4-methyl-5-(2-phosphoethyl)-thiazole: step 1/1. Condenses 4-methyl-5-(beta-hydroxyethyl)thiazole monophosphate (THZ-P) and 2-methyl-4-amino-5-hydroxymethyl pyrimidine pyrophosphate (HMP-PP) to form thiamine monophosphate (TMP). The polypeptide is Thiamine-phosphate synthase (Helicobacter pylori (strain HPAG1)).